A 229-amino-acid polypeptide reads, in one-letter code: Heptaprenylglyceryl phosphate synthase (229 aa).

Lys-12 is a sn-glycerol 1-phosphate binding site. Residues Asp-14 and Thr-40 each coordinate Mg(2+). Residues 159–164 (YIEYSG), Gly-189, and 209–210 (GN) contribute to the sn-glycerol 1-phosphate site.

The protein belongs to the GGGP/HepGP synthase family. Group I subfamily. Homodimer. Mg(2+) is required as a cofactor.

It catalyses the reaction sn-glycerol 1-phosphate + all-trans-heptaprenyl diphosphate = 3-heptaprenyl-sn-glycero-1-phosphate + diphosphate. The protein operates within membrane lipid metabolism; glycerophospholipid metabolism. Prenyltransferase that catalyzes in vivo the transfer of the heptaprenyl moiety of heptaprenyl pyrophosphate (HepPP; 35 carbon atoms) to the C3 hydroxyl of sn-glycerol-1-phosphate (G1P), producing heptaprenylglyceryl phosphate (HepGP). This reaction is an ether-bond-formation step in the biosynthesis of archaea-type G1P-based membrane lipids found in Bacillales. The polypeptide is Heptaprenylglyceryl phosphate synthase (Staphylococcus saprophyticus subsp. saprophyticus (strain ATCC 15305 / DSM 20229 / NCIMB 8711 / NCTC 7292 / S-41)).